We begin with the raw amino-acid sequence, 430 residues long: Enolase (430 aa).

Gln164 contacts (2R)-2-phosphoglycerate. Glu208 functions as the Proton donor in the catalytic mechanism. 3 residues coordinate Mg(2+): Asp245, Glu288, and Asp315. 4 residues coordinate (2R)-2-phosphoglycerate: Lys340, Arg369, Ser370, and Lys391. The Proton acceptor role is filled by Lys340.

It belongs to the enolase family. It depends on Mg(2+) as a cofactor.

The protein localises to the cytoplasm. It localises to the secreted. The protein resides in the cell surface. The catalysed reaction is (2R)-2-phosphoglycerate = phosphoenolpyruvate + H2O. Its pathway is carbohydrate degradation; glycolysis; pyruvate from D-glyceraldehyde 3-phosphate: step 4/5. In terms of biological role, catalyzes the reversible conversion of 2-phosphoglycerate (2-PG) into phosphoenolpyruvate (PEP). It is essential for the degradation of carbohydrates via glycolysis. This Thermococcus gammatolerans (strain DSM 15229 / JCM 11827 / EJ3) protein is Enolase.